Reading from the N-terminus, the 148-residue chain is UPF0134 protein MPN_410 (148 aa).

The protein belongs to the UPF0134 family.

The protein is UPF0134 protein MPN_410 of Mycoplasma pneumoniae (strain ATCC 29342 / M129 / Subtype 1) (Mycoplasmoides pneumoniae).